The primary structure comprises 361 residues: Chorismate synthase (361 aa).

The NADP(+) site is built by Arg48 and Arg54. FMN is bound by residues 125 to 127, 238 to 239, Gly278, 293 to 297, and Arg319; these read RSS, NA, and KPTSS.

Belongs to the chorismate synthase family. Homotetramer. FMNH2 serves as cofactor.

It catalyses the reaction 5-O-(1-carboxyvinyl)-3-phosphoshikimate = chorismate + phosphate. The protein operates within metabolic intermediate biosynthesis; chorismate biosynthesis; chorismate from D-erythrose 4-phosphate and phosphoenolpyruvate: step 7/7. Functionally, catalyzes the anti-1,4-elimination of the C-3 phosphate and the C-6 proR hydrogen from 5-enolpyruvylshikimate-3-phosphate (EPSP) to yield chorismate, which is the branch point compound that serves as the starting substrate for the three terminal pathways of aromatic amino acid biosynthesis. This reaction introduces a second double bond into the aromatic ring system. This Citrobacter koseri (strain ATCC BAA-895 / CDC 4225-83 / SGSC4696) protein is Chorismate synthase.